The following is a 189-amino-acid chain: Protein GrpE (189 aa).

Residues 1–31 form a disordered region; the sequence is MSKKHMKGNGGEVPENSEMSGSEELVAVEPG.

The protein belongs to the GrpE family. In terms of assembly, homodimer.

The protein localises to the cytoplasm. Its function is as follows. Participates actively in the response to hyperosmotic and heat shock by preventing the aggregation of stress-denatured proteins, in association with DnaK and GrpE. It is the nucleotide exchange factor for DnaK and may function as a thermosensor. Unfolded proteins bind initially to DnaJ; upon interaction with the DnaJ-bound protein, DnaK hydrolyzes its bound ATP, resulting in the formation of a stable complex. GrpE releases ADP from DnaK; ATP binding to DnaK triggers the release of the substrate protein, thus completing the reaction cycle. Several rounds of ATP-dependent interactions between DnaJ, DnaK and GrpE are required for fully efficient folding. The polypeptide is Protein GrpE (Syntrophobacter fumaroxidans (strain DSM 10017 / MPOB)).